A 254-amino-acid polypeptide reads, in one-letter code: Flagellar L-ring protein 1 (254 aa).

An N-terminal signal peptide occupies residues 1–26; sequence MSPFSSAFRPRRIAISALLLAIGALA.

It belongs to the FlgH family. As to quaternary structure, the basal body constitutes a major portion of the flagellar organelle and consists of four rings (L,P,S, and M) mounted on a central rod.

The protein resides in the cell outer membrane. It localises to the bacterial flagellum basal body. Functionally, assembles around the rod to form the L-ring and probably protects the motor/basal body from shearing forces during rotation. This chain is Flagellar L-ring protein 1 (flgH1), found in Bradyrhizobium diazoefficiens (strain JCM 10833 / BCRC 13528 / IAM 13628 / NBRC 14792 / USDA 110).